We begin with the raw amino-acid sequence, 98 residues long: NADH-ubiquinone oxidoreductase chain 4L (98 aa).

Transmembrane regions (helical) follow at residues 1-21 (MSIT…GLLM), 29-49 (SLLC…MAIL), and 61-81 (IILL…LVMV).

Belongs to the complex I subunit 4L family. In terms of assembly, core subunit of respiratory chain NADH dehydrogenase (Complex I) which is composed of 45 different subunits.

The protein resides in the mitochondrion inner membrane. It carries out the reaction a ubiquinone + NADH + 5 H(+)(in) = a ubiquinol + NAD(+) + 4 H(+)(out). Functionally, core subunit of the mitochondrial membrane respiratory chain NADH dehydrogenase (Complex I) which catalyzes electron transfer from NADH through the respiratory chain, using ubiquinone as an electron acceptor. Part of the enzyme membrane arm which is embedded in the lipid bilayer and involved in proton translocation. This is NADH-ubiquinone oxidoreductase chain 4L (MT-ND4L) from Mesophylla macconnelli (MacConnell's bat).